The chain runs to 536 residues: Caspase recruitment domain-containing protein 9 (536 aa).

Ser-2 carries the post-translational modification Phosphoserine. Zn(2+) is bound by residues Asp-3, Cys-10, and His-73. Residues 6-98 form the CARD domain; the sequence is NDDECWSALE…QLYRKVTGKE (93 aa). The segment at 99-116 is linker; that stretch reads PARVFSMIIDASGESGLT. Coiled-coil stretches lie at residues 117–277 and 303–420; these read QLLM…HRNS and SLRK…QLDM. Residue Lys-125 forms a Glycyl lysine isopeptide (Lys-Gly) (interchain with G-Cter in ubiquitin) linkage. Position 231 is a phosphothreonine (Thr-231). Ser-277 carries the post-translational modification Phosphoserine. Ser-424, Ser-425, Ser-431, Ser-451, Ser-461, Ser-483, and Ser-498 each carry phosphoserine. The segment at 425-451 is disordered; that stretch reads SDLEDSSPRNSQELSLPQDLEEDAQLS. The segment at 472–536 is disordered; sequence KHLSQTHDTV…GSDNTDTEGS (65 aa). Positions 487 to 502 are enriched in basic and acidic residues; the sequence is PPEKERRRLKESFENY. Phosphothreonine; by CK2 occurs at positions 531 and 533.

As to quaternary structure, monomer. Homodimer; homodimerization is mediated by the CARD domain which forms an extensive interaction with the adjacent linker and coiled-coil regions; leads to an autoinhibited state. Homomultimer; polymerizes following activation, forming a nucleating helical template that seeds BCL10-filament formation via a CARD-CARD interaction. Interacts (via CARD domain) with BCL10 (via CARD domain); interaction takes place following CARD9 activation and polymerization, leading to the formation of a filamentous CBM complex assembly. Component of a CBM complex (CARD9-BCL10, MALT1), composed of CARD9, BCL10 and MALT1. Interacts with RASGRF1. Interacts with NOD2 (via NACHT domain); interaction is direct. Interacts with RIPK2. Interacts with VHL; without leading to protein degradation. Post-translationally, phosphorylated at Thr-231 by PRKCD downstream of C-type lectin receptors activation: phosphorylation promotes interaction with BCL10, followed by activation of NF-kappa-B and MAP kinase p38 pathways. Phosphorylated at Thr-531 and Thr-533 by CK2 following interaction with VHL, leading to inhibit the ability to activate NF-kappa-B. In terms of processing, ubiquitinated at Lys-125 via 'Lys-27'-linked ubiquitin by TRIM62 downstream of C-type lectin receptors activation; leading to CARD9 activation, followed by activation of NF-kappa-B and MAP kinase p38 pathways. Deubiquitinated at Lys-125 by USP15, inhibiting CARD9.

It is found in the cytoplasm. With respect to regulation, maintained in an autoinhibited state via homodimerization in which the CARD domain forms an extensive interaction with the adjacent linker and coiled-coil regions. Activation downstream of C-type lectin receptors, by phosphorylation by PRKCD and/or ubiquitination by TRIM62, triggers disruption of the CARD domain-coiled coil interface, CARD9 homooligomerization and BCL10 recruitment, followed by activation of NF-kappa-B and MAP kinase p38 pathways. Zinc-binding inhibits activation by stabilizing the CARD ground-state conformation and restricting its capacity to form BCL10-nucleating filaments. In terms of biological role, adapter protein that plays a key role in innate immune response against fungi by forming signaling complexes downstream of C-type lectin receptors. CARD9-mediated signals are essential for antifungal immunity against a subset of fungi from the phylum Ascomycota. Transduces signals in myeloid cells downstream of C-type lectin receptors CLEC7A (dectin-1), CLEC6A (dectin-2) and CLEC4E (Mincle), which detect pathogen-associated molecular pattern metabolites (PAMPs), such as fungal carbohydrates, and trigger CARD9 activation. Upon activation, CARD9 homooligomerizes to form a nucleating helical template that recruits BCL10 via CARD-CARD interaction, thereby promoting polymerization of BCL10 and subsequent recruitment of MALT1: this leads to activation of NF-kappa-B and MAP kinase p38 (MAPK11, MAPK12, MAPK13 and/or MAPK14) pathways which stimulate expression of genes encoding pro-inflammatory cytokines and chemokines. CARD9 signaling in antigen-presenting cells links innate sensing of fungi to the activation of adaptive immunity and provides a cytokine milieu that induces the development and subsequent of interleukin 17-producing T helper (Th17) cells. Also involved in activation of myeloid cells via classical ITAM-associated receptors and TLR: required for TLR-mediated activation of MAPK, while it is not required for TLR-induced activation of NF-kappa-B. CARD9 can also be engaged independently of BCL10: forms a complex with RASGRF1 downstream of C-type lectin receptors, which recruits and activates HRAS, leading to ERK activation and the production of cytokines. Acts as an important regulator of the intestinal commensal fungi (mycobiota) component of the gut microbiota. Plays an essential role in antifungal immunity against dissemination of gut fungi: acts by promoting induction of antifungal IgG antibodies response in CX3CR1(+) macrophages to confer protection against disseminated C.albicans or C.auris infection. Also mediates immunity against other pathogens, such as certain bacteria, viruses and parasites; CARD9 signaling is however redundant with other innate immune responses. In response to L.monocytogenes infection, required for the production of inflammatory cytokines activated by intracellular peptidoglycan: acts by connecting NOD2 recognition of peptidoglycan to downstream activation of MAP kinases (MAPK) without activating NF-kappa-B. The chain is Caspase recruitment domain-containing protein 9 from Rattus norvegicus (Rat).